A 202-amino-acid polypeptide reads, in one-letter code: Casparian strip membrane protein 1 (202 aa).

Residues 1–13 are compositionally biased toward polar residues; the sequence is MEKSESSTIQIAE. Residues 1 to 30 form a disordered region; that stretch reads MEKSESSTIQIAESSKDRKGKAPLLPPPVH. Residues 1–42 lie on the Cytoplasmic side of the membrane; that stretch reads MEKSESSTIQIAESSKDRKGKAPLLPPPVHHERAAGYKRGVA. A helical membrane pass occupies residues 43–63; the sequence is IFDLILRISAATAALAATIVM. At 64–90 the chain is on the extracellular side; it reads GTTEQTLPFFTQFFQFRASYDDLPTFT. The helical transmembrane segment at 91 to 111 threads the bilayer; it reads FFVIAMAIVTGYLILSVPFSI. Over 112–130 the chain is Cytoplasmic; the sequence is VCIARPVVAAPRILLILCD. The helical transmembrane segment at 131-151 threads the bilayer; that stretch reads TLTVTLATSAAGASAAIVYLA. At 152 to 177 the chain is on the extracellular side; it reads HNGXSDANWLAICQQFNDFCQRVSGA. The helical transmembrane segment at 178-198 threads the bilayer; sequence VVAAFVSAVLLIFLVVLSAIV. At 199 to 202 the chain is on the cytoplasmic side; that stretch reads LKKH.

This sequence belongs to the Casparian strip membrane proteins (CASP) family. Homodimer and heterodimers.

The protein localises to the cell membrane. In terms of biological role, regulates membrane-cell wall junctions and localized cell wall deposition. Required for establishment of the Casparian strip membrane domain (CSD) and the subsequent formation of Casparian strips, a cell wall modification of the root endodermis that determines an apoplastic barrier between the intraorganismal apoplasm and the extraorganismal apoplasm and prevents lateral diffusion. This chain is Casparian strip membrane protein 1, found in Triphysaria pusilla (Dwarf owl's-clover).